A 338-amino-acid polypeptide reads, in one-letter code: Tetraacyldisaccharide 4'-kinase (338 aa).

Residue 53–60 (VAGGAGKT) coordinates ATP.

Belongs to the LpxK family.

The catalysed reaction is a lipid A disaccharide + ATP = a lipid IVA + ADP + H(+). It functions in the pathway glycolipid biosynthesis; lipid IV(A) biosynthesis; lipid IV(A) from (3R)-3-hydroxytetradecanoyl-[acyl-carrier-protein] and UDP-N-acetyl-alpha-D-glucosamine: step 6/6. Functionally, transfers the gamma-phosphate of ATP to the 4'-position of a tetraacyldisaccharide 1-phosphate intermediate (termed DS-1-P) to form tetraacyldisaccharide 1,4'-bis-phosphate (lipid IVA). The chain is Tetraacyldisaccharide 4'-kinase from Polaromonas sp. (strain JS666 / ATCC BAA-500).